A 999-amino-acid polypeptide reads, in one-letter code: RING finger domain and kelch repeat-containing protein DDB_G0271372 (999 aa).

Residues 7-49 (CPNCLKVFNNPRQLECDHILCTRCIEGVYNPGRTPIIKCPVCD) form an RING-type zinc finger. The span at 92–143 (STGSSNNNNNNNNNNNNNNNNFVINNSNNKNNGATTTTTTTTTTTNSNSNST) shows a compositional bias: low complexity. Disordered regions lie at residues 92 to 147 (STGS…KSKV) and 159 to 209 (ASPK…SSPP). Positions 165–196 (GSSQGSLTTINNQKKLTLSPQRASSTTTTSVN) are enriched in polar residues. The segment at 258-302 (AELSKCNDHDQKKFTIFCTDCDQLLCDECLNNNQQQHENHQLNKI) adopts a B box-type zinc-finger fold. Residues Cys263, His266, Cys286, and His294 each contribute to the Zn(2+) site. A coiled-coil region spans residues 355-402 (DIDTMIENLKERKNALISQIDKEYEEQKLELKDQIETINTTIVDIQNN). Low complexity-rich tracts occupy residues 485–516 (GVSSSPTGTGSNGTPQQQQQQSANGNPTIITT) and 526–536 (SPSPTSSSSST). Residues 485-637 (GVSSSPTGTG…TSTNGSNTKI (153 aa)) are disordered. Residues 552 to 612 (LSSQNYDNFG…SHGSKLNDNI (61 aa)) are compositionally biased toward polar residues. Low complexity predominate over residues 613 to 635 (NTNNNNSPSPTSSSTTSTNGSNT). 5 Kelch repeats span residues 655-700 (ITAR…YDNN), 702-745 (TIYR…VFDG), 748-793 (YIYL…YHPT), 796-842 (CIYV…FDGS), and 844-892 (YINI…SMNL). Over residues 904-924 (NSFSSISSHSSLNSSSSNNGI) the composition is skewed to low complexity. The tract at residues 904–936 (NSFSSISSHSSLNSSSSNNGISGSGGSGGDNEI) is disordered.

The sequence is that of RING finger domain and kelch repeat-containing protein DDB_G0271372 from Dictyostelium discoideum (Social amoeba).